Consider the following 504-residue polypeptide: MKRLKNLFIIFIFLFLLSQVSAYITFKNIDYNAQYLEPSKTYDLYITIESDKEINNTVVYIEPTNQISKENIEIIRGKQWIGHLFPYEYGVAHLIIKINPNAPNYDYKITGYCNYTKGNQQYSENRIFTLPVRGKANLVIETTNNILKVGNNQILLLLTNKGTGTAENIKIEFQNSNNLMVLGDNTFTISALGSKTSTYIPLTIFAKKEGVYSINYKISYKNPYNLLELTQKSETIEGDSKTETLTYQNKNIVEETGILTFNVFPNELISINIKNPTITVGKIENLTISIKNNYKDSLFVVQISKYFIGNNQKSIFIKKGETKNLTFQIKVDKEGVTSIPIVIYFDNNQIEKNLTINVVGKADLVLSGIDIESSFNEIKITGDIDNIGTGKAKSVLISIEKTKNIIPKKPYENYFVGTLNPDDYGSFELHCQINGNVNEIPLKISYRDEDNNLITIYKTVKISKEVVSLKTNNNGGINYLVVGIAILFCVGVVYLIYRGFVKKK.

The helical transmembrane segment at 6 to 26 (NLFIIFIFLFLLSQVSAYITF) threads the bilayer.

It to M.jannaschii MJ1506 and MJ1561.

The protein localises to the membrane. This is an uncharacterized protein from Methanocaldococcus jannaschii (strain ATCC 43067 / DSM 2661 / JAL-1 / JCM 10045 / NBRC 100440) (Methanococcus jannaschii).